A 520-amino-acid polypeptide reads, in one-letter code: MQRDTSLRDPFATEDESSASEIGRAPERRLRIPQNQLRNADERCEIRSPQPVPGPGLPRSIAVRTETAATSKDAPAPAPSLRLSLGLPRSRTKAHSGQTSDATNITSTARQADDAVRNTDSDALLSRLSALKLGYLPSEPFTQEFSSTLPSNGGHPTGRSGFPQPHHPGSSIRRSPLINIGTYLRCSTIDAEVESFLRQGCEQKQIISVGAGSDSRYWRIMADTDLSRRLHHYVEIDFEENTSQKLSRILKSPILRASLDTNSSVYGVPLSHLSQFSLGVPCHTGSESRQFDVIRSSKYSLLAADVRSLHPDTPSAERIDLEHLLGPASTGLDSTLPTLILFECVLAYIAPDRADWLIRHLGQRFAAVQALSYDIALAGDAHPSAKAVACVSSESESSECGQTVGTADSAISTSTTVASPAPPSRFGRVMLQNLEMRKLSLPGARAYPTIHAQSQRFAQAWSDSQALQIETSGRSLFSIWSDLGAEQRSRLSRLEGLDEVEEIDMLLQHYCIVQARRQRP.

2 disordered regions span residues methionine 1 to valine 116 and threonine 142 to arginine 174. Residues proline 79–arginine 89 are compositionally biased toward low complexity. Composition is skewed to polar residues over residues histidine 95 to arginine 110 and threonine 142 to serine 151. S-adenosyl-L-methionine-binding positions include arginine 185, glycine 210, aspartate 237, aspartate 305–valine 306, and glutamate 343.

It belongs to the methyltransferase superfamily. LCMT family.

It catalyses the reaction [phosphatase 2A protein]-C-terminal L-leucine + S-adenosyl-L-methionine = [phosphatase 2A protein]-C-terminal L-leucine methyl ester + S-adenosyl-L-homocysteine. In terms of biological role, methylates the carboxyl group of the C-terminal leucine residue of protein phosphatase 2A catalytic subunits to form alpha-leucine ester residues. In Mycosarcoma maydis (Corn smut fungus), this protein is Leucine carboxyl methyltransferase 1 (PPM1).